Here is an 89-residue protein sequence, read N- to C-terminus: Small ribosomal subunit protein uS15 (89 aa).

It belongs to the universal ribosomal protein uS15 family. Part of the 30S ribosomal subunit. Forms a bridge to the 50S subunit in the 70S ribosome, contacting the 23S rRNA.

Functionally, one of the primary rRNA binding proteins, it binds directly to 16S rRNA where it helps nucleate assembly of the platform of the 30S subunit by binding and bridging several RNA helices of the 16S rRNA. Its function is as follows. Forms an intersubunit bridge (bridge B4) with the 23S rRNA of the 50S subunit in the ribosome. This Chromohalobacter salexigens (strain ATCC BAA-138 / DSM 3043 / CIP 106854 / NCIMB 13768 / 1H11) protein is Small ribosomal subunit protein uS15.